Consider the following 157-residue polypeptide: Crossover junction endodeoxyribonuclease RuvC (157 aa).

Residues Asp-7, Glu-67, and Asp-140 contribute to the active site. Asp-7, Glu-67, and Asp-140 together coordinate Mg(2+).

The protein belongs to the RuvC family. As to quaternary structure, homodimer which binds Holliday junction (HJ) DNA. The HJ becomes 2-fold symmetrical on binding to RuvC with unstacked arms; it has a different conformation from HJ DNA in complex with RuvA. In the full resolvosome a probable DNA-RuvA(4)-RuvB(12)-RuvC(2) complex forms which resolves the HJ. Requires Mg(2+) as cofactor.

It is found in the cytoplasm. It carries out the reaction Endonucleolytic cleavage at a junction such as a reciprocal single-stranded crossover between two homologous DNA duplexes (Holliday junction).. Its function is as follows. The RuvA-RuvB-RuvC complex processes Holliday junction (HJ) DNA during genetic recombination and DNA repair. Endonuclease that resolves HJ intermediates. Cleaves cruciform DNA by making single-stranded nicks across the HJ at symmetrical positions within the homologous arms, yielding a 5'-phosphate and a 3'-hydroxyl group; requires a central core of homology in the junction. The consensus cleavage sequence is 5'-(A/T)TT(C/G)-3'. Cleavage occurs on the 3'-side of the TT dinucleotide at the point of strand exchange. HJ branch migration catalyzed by RuvA-RuvB allows RuvC to scan DNA until it finds its consensus sequence, where it cleaves and resolves the cruciform DNA. This chain is Crossover junction endodeoxyribonuclease RuvC, found in Rickettsia bellii (strain RML369-C).